We begin with the raw amino-acid sequence, 561 residues long: Glutamate--tRNA ligase (561 aa).

A 'HIGH' region motif is present at residues 107–117; that stretch reads PNPSGPLHLGH.

It belongs to the class-I aminoacyl-tRNA synthetase family. Glutamate--tRNA ligase type 2 subfamily.

It is found in the cytoplasm. The enzyme catalyses tRNA(Glu) + L-glutamate + ATP = L-glutamyl-tRNA(Glu) + AMP + diphosphate. Catalyzes the attachment of glutamate to tRNA(Glu) in a two-step reaction: glutamate is first activated by ATP to form Glu-AMP and then transferred to the acceptor end of tRNA(Glu). The protein is Glutamate--tRNA ligase of Methanospirillum hungatei JF-1 (strain ATCC 27890 / DSM 864 / NBRC 100397 / JF-1).